The following is a 688-amino-acid chain: Elongation factor G (688 aa).

The tr-type G domain maps to 8-282 (EKTRNIGIMA…AIIDYLPSPM (275 aa)). GTP contacts are provided by residues 17–24 (AHIDAGKT), 81–85 (DTPGH), and 135–138 (NKMD).

Belongs to the TRAFAC class translation factor GTPase superfamily. Classic translation factor GTPase family. EF-G/EF-2 subfamily.

It is found in the cytoplasm. Catalyzes the GTP-dependent ribosomal translocation step during translation elongation. During this step, the ribosome changes from the pre-translocational (PRE) to the post-translocational (POST) state as the newly formed A-site-bound peptidyl-tRNA and P-site-bound deacylated tRNA move to the P and E sites, respectively. Catalyzes the coordinated movement of the two tRNA molecules, the mRNA and conformational changes in the ribosome. The chain is Elongation factor G from Phytoplasma mali (strain AT).